A 261-amino-acid chain; its full sequence is Vacuolar iron transporter (261 aa).

A helical membrane pass occupies residues 66–86 (GQVLIAALAALFAGALSMAVG). Residues glutamate 105, glutamate 108, glutamate 116, glutamate 119, and glutamate 154 each contribute to the Fe cation site. The next 3 membrane-spanning stretches (helical) occupy residues 170-190 (MVSFAMFITFGCIPLLVGAWI), 197-217 (IGAITGVSLILLAISGAVGAF), and 233-253 (GGALAMAITIGVGFLSETLNI).

Belongs to the CCC1 family.

It is found in the vacuole membrane. The enzyme catalyses Fe(2+)(in) = Fe(2+)(out). Vacuolar iron transporter involved in the transfer of iron ions from the cytosol to the vacuole for intracellular iron storage. This is Vacuolar iron transporter from Acanthamoeba castellanii (strain ATCC 30010 / Neff).